The primary structure comprises 189 residues: NADH-quinone oxidoreductase subunit B (189 aa).

Cys-39, Cys-40, Cys-104, and Cys-135 together coordinate [4Fe-4S] cluster.

The protein belongs to the complex I 20 kDa subunit family. In terms of assembly, NDH-1 is composed of 14 different subunits. Subunits NuoB, C, D, E, F, and G constitute the peripheral sector of the complex. [4Fe-4S] cluster serves as cofactor.

It is found in the cell inner membrane. It carries out the reaction a quinone + NADH + 5 H(+)(in) = a quinol + NAD(+) + 4 H(+)(out). In terms of biological role, NDH-1 shuttles electrons from NADH, via FMN and iron-sulfur (Fe-S) centers, to quinones in the respiratory chain. The immediate electron acceptor for the enzyme in this species is believed to be a menaquinone. Couples the redox reaction to proton translocation (for every two electrons transferred, four hydrogen ions are translocated across the cytoplasmic membrane), and thus conserves the redox energy in a proton gradient. The polypeptide is NADH-quinone oxidoreductase subunit B (Chlorobaculum parvum (strain DSM 263 / NCIMB 8327) (Chlorobium vibrioforme subsp. thiosulfatophilum)).